We begin with the raw amino-acid sequence, 89 residues long: Small ribosomal subunit protein uS17 (89 aa).

It belongs to the universal ribosomal protein uS17 family. As to quaternary structure, part of the 30S ribosomal subunit.

In terms of biological role, one of the primary rRNA binding proteins, it binds specifically to the 5'-end of 16S ribosomal RNA. In Xanthomonas axonopodis pv. citri (strain 306), this protein is Small ribosomal subunit protein uS17.